Consider the following 423-residue polypeptide: F-box/LRR-repeat protein 2 (423 aa).

The region spanning 9 to 55 (GLINKKLPKELLLRIFSFLDIVTLCRCAQISKAWNILALDGSNWQRI) is the F-box domain. LRR repeat units follow at residues 61 to 87 (QTDV…SLRG), 88 to 113 (CIGV…NLNG), 114 to 139 (CTKI…DLTS), 140 to 165 (CVSI…NLSW), 166 to 191 (CDQI…LLRG), 192 to 217 (CTQL…NLQS), 218 to 243 (CSRV…CLSG), 244 to 269 (CGSL…EAAR), 270 to 295 (CSHL…DLEE), 296 to 321 (CILI…SLSH), 322 to 350 (CELI…ELDN), 351 to 375 (CLLI…ELYD), and 376 to 401 (CQQV…AYFA). An interaction with Calmodulin region spans residues 80-90 (LRKLSLRGCIG). Lys201 is covalently cross-linked (Glycyl lysine isopeptide (Lys-Gly) (interchain with G-Cter in ubiquitin)). Phosphothreonine is present on Thr404. A lipid anchor (S-geranylgeranyl cysteine) is attached at Cys420. A CAAX motif motif is present at residues 420–423 (CVIL).

As to quaternary structure, part of the SCF (SKP1-CUL1-F-box) E3 ubiquitin-protein ligase complex SCF(FBXL2) composed of CUL1, SKP1, RBX1 and FBXL2. Interacts with calmodulin; may antagonize substrate ubiquitination by SCF(FBXL2). May interact with PIK3R1. Interacts with PTPN13. Phosphorylated by GSK-beta (GSK3B), promoting recognition by FBXO3, leading to its ubiquitination by the SCF(FBXO3) complex. Post-translationally, ubiquitinated at Lys-201 by the SCF(FBXO3) complex in response to lipopolysaccharide (LPS), leading to its degradation by the proteasome.

The protein localises to the membrane. It participates in protein modification; protein ubiquitination. Functionally, calcium-activated substrate recognition component of the SCF (SKP1-cullin-F-box protein) E3 ubiquitin-protein ligase complex, SCF(FBXL2), which mediates the ubiquitination and subsequent proteasomal degradation of target proteins. Unlike many F-box proteins, FBXL2 does not seem to target phosphodegron within its substrates but rather calmodulin-binding motifs and is thereby antagonized by calmodulin. This is the case for the cyclins CCND2 and CCND3 which polyubiquitination and subsequent degradation are inhibited by calmodulin. Through CCND2 and CCND3 degradation induces cell-cycle arrest in G(0). SCF(FBXL2) also mediates PIK3R2 ubiquitination and proteasomal degradation thereby regulating phosphatidylinositol 3-kinase signaling and autophagy. PCYT1A monoubiquitination by SCF(FBXL2) and subsequent degradation regulates synthesis of phosphatidylcholine, which is utilized for formation of membranes and of pulmonary surfactant. The SCF(FBXL2) complex acts as a regulator of inflammation by mediating ubiquitination and degradation of TRAF proteins (TRAF1, TRAF2, TRAF3, TRAF4, TRAF5 and TRAF6). The SCF(FBXL2) complex acts as a negative regulator of the NLRP3 inflammasome by mediating ubiquitination and degradation of NLRP3. In Bos taurus (Bovine), this protein is F-box/LRR-repeat protein 2.